The sequence spans 128 residues: Small ribosomal subunit protein eS8 (128 aa).

A disordered region spans residues 1 to 31 (MAWYQGNDLRKPTGGKKTRHRKKRKHELGRP). A compositionally biased stretch (basic residues) spans 13 to 27 (TGGKKTRHRKKRKHE).

It belongs to the eukaryotic ribosomal protein eS8 family. Part of the 30S ribosomal subunit.

The polypeptide is Small ribosomal subunit protein eS8 (Staphylothermus marinus (strain ATCC 43588 / DSM 3639 / JCM 9404 / F1)).